The chain runs to 21 residues: Cupiennin-6c (21 aa).

Ser21 bears the Serine amide mark.

Expressed by the venom gland.

It is found in the secreted. In Cupiennius salei (American wandering spider), this protein is Cupiennin-6c.